Here is a 179-residue protein sequence, read N- to C-terminus: CDP-archaeol synthase (179 aa).

4 helical membrane-spanning segments follow: residues 53–73, 88–108, 120–140, and 145–165; these read FVGG…IEKL, FTLT…GSFI, FLIV…SLYP, and LFTA…HMGI.

This sequence belongs to the CDP-archaeol synthase family. Mg(2+) serves as cofactor.

The protein resides in the cell membrane. It catalyses the reaction 2,3-bis-O-(geranylgeranyl)-sn-glycerol 1-phosphate + CTP + H(+) = CDP-2,3-bis-O-(geranylgeranyl)-sn-glycerol + diphosphate. Its pathway is membrane lipid metabolism; glycerophospholipid metabolism. Its function is as follows. Catalyzes the formation of CDP-2,3-bis-(O-geranylgeranyl)-sn-glycerol (CDP-archaeol) from 2,3-bis-(O-geranylgeranyl)-sn-glycerol 1-phosphate (DGGGP) and CTP. This reaction is the third ether-bond-formation step in the biosynthesis of archaeal membrane lipids. Can use CTP or dCTP, but not ATP, GTP or TTP. In Archaeoglobus fulgidus (strain ATCC 49558 / DSM 4304 / JCM 9628 / NBRC 100126 / VC-16), this protein is CDP-archaeol synthase.